Reading from the N-terminus, the 247-residue chain is tRNA pseudouridine synthase A (247 aa).

Residue Asp53 is the Nucleophile of the active site. Residue Tyr111 coordinates substrate.

It belongs to the tRNA pseudouridine synthase TruA family. In terms of assembly, homodimer.

It catalyses the reaction uridine(38/39/40) in tRNA = pseudouridine(38/39/40) in tRNA. Formation of pseudouridine at positions 38, 39 and 40 in the anticodon stem and loop of transfer RNAs. This Bacillus subtilis (strain 168) protein is tRNA pseudouridine synthase A.